A 311-amino-acid chain; its full sequence is 2-dehydro-3-deoxygluconokinase (311 aa).

Substrate contacts are provided by residues 34–35 (GS), 106–108 (YYR), and R166. Residues 164 to 166 (NIR), 224 to 229 (KLGPKG), 253 to 256 (GAGD), and S283 each bind ATP. G253 and D256 together coordinate substrate. D256 (proton acceptor) is an active-site residue. D292 provides a ligand contact to substrate.

This sequence belongs to the carbohydrate kinase PfkB family. Homotetramer. A divalent metal cation serves as cofactor.

It catalyses the reaction 2-dehydro-3-deoxy-D-gluconate + ATP = 2-dehydro-3-deoxy-6-phospho-D-gluconate + ADP + H(+). It functions in the pathway carbohydrate acid metabolism; 2-dehydro-3-deoxy-D-gluconate degradation; D-glyceraldehyde 3-phosphate and pyruvate from 2-dehydro-3-deoxy-D-gluconate: step 1/2. Functionally, involved in the degradation of glucose via the semi-phosphorylative Entner-Doudoroff pathway. Catalyzes the phosphorylation of 2-keto-3-deoxygluconate (KDG) to produce 2-keto-3-deoxy-6-phosphogluconate (KDPG). Can also use GTP, but not ADP or AMP, as a phosphoryl donor and 2-keto-D-gluconate (KG) as a phosphoryl acceptor. In Sulfurisphaera tokodaii (strain DSM 16993 / JCM 10545 / NBRC 100140 / 7) (Sulfolobus tokodaii), this protein is 2-dehydro-3-deoxygluconokinase.